We begin with the raw amino-acid sequence, 212 residues long: uncharacterized protein (212 aa).

An N-terminal signal peptide occupies residues 1–18 (MQLTQVLAVAILAAGVSA). The segment at 108 to 180 (VSHNRVNAKQ…KDYGHKDYGH (73 aa)) is disordered. Residues 117-180 (QRRDDKKDYG…KDYGHKDYGH (64 aa)) show a composition bias toward basic and acidic residues. Residues 120–210 (DDKKDYGKND…KDYGYKGYDD (91 aa)) form a 15 X 5 AA tandem repeats of K-D-Y-G-H region. The stretch at 123-127 (KDYGK) is repeat 1. One copy of the 2; truncated repeat lies at 128 to 132 (NDYGK). Tandem repeats lie at residues 133–137 (KDYGK), 138–142 (KDYGK), and 143–147 (KDYGK). A 6; truncated repeat occupies 148–152 (KEYDP). 5 consecutive repeat copies span residues 166–170 (KDYGH), 171–175 (KDYGH), 176–180 (KDYGH), 181–185 (KDYGH), and 186–190 (KDYGH). A 12; truncated repeat occupies 191-195 (DDYGY). The stretch at 196 to 200 (KGYDD) is one 13; truncated repeat. One copy of the 14; truncated repeat lies at 201–205 (KDYGY). The stretch at 206 to 210 (KGYDD) is one 15; truncated repeat.

The protein resides in the secreted. This is an uncharacterized protein from Arthroderma benhamiae (strain ATCC MYA-4681 / CBS 112371) (Trichophyton mentagrophytes).